We begin with the raw amino-acid sequence, 452 residues long: Protein bfr2 (452 aa).

Basic and acidic residues-rich tracts occupy residues 1 to 10 and 19 to 34; these read MGKVSLKDEL and QERD…SDRE. Positions 1–141 are disordered; sequence MGKVSLKDEL…SAIPEKDMDR (141 aa). Residues serine 31, serine 36, and serine 37 each carry the phosphoserine modification. The span at 43 to 57 shows a compositional bias: basic and acidic residues; that stretch reads TLGREHYVDVSESKL. The segment covering 78–92 has biased composition (low complexity); sequence ELLNSGSLNSQSSSP. Positions 93-106 are enriched in acidic residues; that stretch reads SEEEDSEEDENDAV.

This sequence belongs to the AATF family.

Its subcellular location is the nucleus. It localises to the nucleolus. The polypeptide is Protein bfr2 (bfr2) (Schizosaccharomyces pombe (strain 972 / ATCC 24843) (Fission yeast)).